Reading from the N-terminus, the 676-residue chain is Envelope glycoprotein (676 aa).

The first 34 residues, 1-34 (MACSTLSKSPKDKIDPRDLLIPLILFLSLKGARS), serve as a signal peptide directing secretion. Residues 35 to 270 (AAPGSSPHQV…SYQNLGPRIP (236 aa)) form a receptor-binding domain (RBD) region. Residues 35–620 (AAPGSSPHQV…FNRSPWFTTL (586 aa)) lie on the Extracellular side of the membrane. A glycan (N-linked (GlcNAc...) asparagine; by host) is linked at Asn46. Intrachain disulfides connect Cys80–Cys132, Cys106–Cys121, Cys107–Cys117, Cys155–Cys175, and Cys167–Cys180. His89 is a Zn(2+) binding site. Asp120 provides a ligand contact to Zn(2+). Asn202 carries an N-linked (GlcNAc...) asparagine; by host glycan. A disulfide bridge links Cys212 with Cys218. Positions 287-321 (NPLPKPAKSPPASSSTPTLISPSPTPTQPPPAGTG) are disordered. Over residues 296-308 (PPASSSTPTLISP) the composition is skewed to low complexity. The span at 309-318 (SPTPTQPPPA) shows a compositional bias: pro residues. N-linked (GlcNAc...) asparagine; by host glycosylation is present at Asn336. Disulfide bonds link Cys346–Cys349, Cys346–Cys573, Cys376–Cys430, Cys395–Cys407, Cys437–Cys450, and Cys565–Cys572. The CXXC motif lies at 346–349 (CWLC). Asn368 and Asn375 each carry an N-linked (GlcNAc...) asparagine; by host glycan. Asn408 and Asn444 each carry an N-linked (GlcNAc...) asparagine; by host glycan. Residues 482 to 502 (VSLTLALLLGGLTMGGIAAGV) form a fusion peptide region. Residues 513 to 547 (QQFQQLHAAVQDDLKEVEKSITNLEKSLTSLSEVV) are a coiled coil. The interval 548–564 (LQNRRGLDLLFLKEGGL) is immunosuppression. Residues 565 to 573 (CAALKEECC) carry the CX6CC motif. The helical transmembrane segment at 621 to 641 (ISTIMGPLIILLLILLFGPCI) threads the bilayer. Cys640 carries the S-palmitoyl cysteine; by host lipid modification. At 642–676 (LNRLVQFVKDRISVVQALVLTQQYHQLKPLEYEPQ) the chain is on the cytoplasmic side. The YXXL motif; contains endocytosis signal motif lies at 665–668 (YHQL).

In terms of assembly, the mature envelope protein (Env) consists of a trimer of SU-TM heterodimers attached by a labile interchain disulfide bond. In terms of processing, specific enzymatic cleavages in vivo yield mature proteins. Envelope glycoproteins are synthesized as an inactive precursor that is N-glycosylated and processed likely by host cell furin or by a furin-like protease in the Golgi to yield the mature SU and TM proteins. The cleavage site between SU and TM requires the minimal sequence [KR]-X-[KR]-R. The R-peptide is released from the C-terminus of the cytoplasmic tail of the TM protein upon particle formation as a result of proteolytic cleavage by the viral protease. Cleavage of this peptide is required for TM to become fusogenic. The CXXC motif is highly conserved across a broad range of retroviral envelope proteins. It is thought to participate in the formation of a labile disulfide bond possibly with the CX6CC motif present in the transmembrane protein. Isomerization of the intersubunit disulfide bond to an SU intrachain disulfide bond is thought to occur upon receptor recognition in order to allow membrane fusion. Post-translationally, the transmembrane protein is palmitoylated. In terms of processing, the R-peptide is palmitoylated.

The protein resides in the virion membrane. It is found in the host cell membrane. The surface protein (SU) attaches the virus to the host cell by binding to its receptor. This interaction triggers the refolding of the transmembrane protein (TM) and is thought to activate its fusogenic potential by unmasking its fusion peptide. Fusion occurs at the host cell plasma membrane. Functionally, the transmembrane protein (TM) acts as a class I viral fusion protein. Under the current model, the protein has at least 3 conformational states: pre-fusion native state, pre-hairpin intermediate state, and post-fusion hairpin state. During viral and target cell membrane fusion, the coiled coil regions (heptad repeats) assume a trimer-of-hairpins structure, positioning the fusion peptide in close proximity to the C-terminal region of the ectodomain. The formation of this structure appears to drive apposition and subsequent fusion of viral and target cell membranes. Membranes fusion leads to delivery of the nucleocapsid into the cytoplasm. The protein is Envelope glycoprotein (env) of Friend murine leukemia virus (isolate FB29) (FrMLV).